Consider the following 210-residue polypeptide: Cytochrome c biogenesis ATP-binding export protein CcmA (210 aa).

An ABC transporter domain is found at 4-208; sequence VPTLSFSKLG…GAIPAQLLEL (205 aa). Residue 39 to 46 coordinates ATP; the sequence is GANGVGKT.

This sequence belongs to the ABC transporter superfamily. CcmA exporter (TC 3.A.1.107) family. The complex is composed of two ATP-binding proteins (CcmA) and two transmembrane proteins (CcmB).

The protein localises to the cell inner membrane. The catalysed reaction is heme b(in) + ATP + H2O = heme b(out) + ADP + phosphate + H(+). Its function is as follows. Part of the ABC transporter complex CcmAB involved in the biogenesis of c-type cytochromes; once thought to export heme, this seems not to be the case, but its exact role is uncertain. Responsible for energy coupling to the transport system. This Albidiferax ferrireducens (strain ATCC BAA-621 / DSM 15236 / T118) (Rhodoferax ferrireducens) protein is Cytochrome c biogenesis ATP-binding export protein CcmA.